Here is a 504-residue protein sequence, read N- to C-terminus: Immunoglobulin-binding protein EibC (504 aa).

The N-terminal stretch at 1 to 26 (MSKKFTMTLLSSSLAGLLVMSGGVSA) is a signal peptide. The tract at residues 27–413 (QEEKYTVPYA…IAANTRTLQQ (387 aa)) is surface exposed passenger domain. Over 27–453 (QEEKYTVPYA…GLFQPYSVGK (427 aa)) the chain is Extracellular. Residues 154 to 280 (DAKASGEFSV…TGTESDKTYG (127 aa)) form a head domain region. Residues 281-296 (TRVLGGLSDGTRNSDA) form a neck region. Positions 297–342 (ATVGQLNRKVGGVYDDVKARITVESEKQKKYTDQKTSEVNEKVEAR) are right-handed coiled-coil (RHcc). The interval 343-368 (TTVGVDSDGKLTRAEGATKTIAVNDG) is saddle domain. Positions 369–434 (LVALSGRTDR…INENHKEMKR (66 aa)) are left-handed coiled-coil (LHcc). Residues 411–438 (LQQHSARLDSQQRQINENHKEMKRAAAQ) adopt a coiled-coil conformation. The interval 411–453 (LQQHSARLDSQQRQINENHKEMKRAAAQSAALTGLFQPYSVGK) is outer membrane translocation of the passenger domain. A run of 4 beta stranded transmembrane segments spans residues 454 to 464 (FNATAAVGGYS), 467 to 478 (QALAVGVGYRFN), 481 to 490 (TAAKAGVAFS), and 494 to 504 (ASWNVGVNFEF). A translocator domain region spans residues 454–504 (FNATAAVGGYSDQQALAVGVGYRFNEQTAAKAGVAFSDGDASWNVGVNFEF).

Belongs to the autotransporter-2 (AT-2) (TC 1.B.40) family. Eib subfamily. In terms of assembly, homotrimer; can probably form mixed heterotrimers in vivo. Will form mixed heterotrimers with EibD; these are correctly located in the outer membrane and bind IgG Fc, although less well than homotrimers. In denaturing gels runs as a band of about 200 kDa. Binds the Fc portion of immunoglobulins; binds more than 1 Fc per subunit.

It localises to the cell surface. The protein localises to the cell outer membrane. Its function is as follows. Binds (in a non-immune fashion) to the Fc portion of human IgG and less well to IgA; binding occurs on the cell surface. Confers the ability to survive exposure to human serum exposure. Binds to the Fc portion of human IgG and IgA and to whole mouse antibodies also via Fc. This chain is Immunoglobulin-binding protein EibC, found in Escherichia coli.